Here is a 325-residue protein sequence, read N- to C-terminus: MTTPVFCTNCGNRLSPQVRFCESCGCPVALTSEPPSFSGPPLSPLPPPPPTFNVDEVPSHKRGVTPWIPFFLLFSSVVVLGGLWWLGAFNLPQWNQWLVKILPTNTSSPVVTSPTPTVAPVDANAVSLEDFVGVWMVMEGAPGEGGEAIFTMSLEGNVIVVEAEGDRVEFPTLNGRKLEGSVVEDGVTIPITVELNQNKDQIIVTVLPPNSELQVGVGQRVKGIDDLDSPSNSRDNSLNIDENVLTERQALELLIAWPEIADWMQRVQQEAPQNQTLLEIVETTPQQYLIRAYESVNNPGEPGHTATFGWYNVDRQTGEVTQSIP.

Residues 67 to 87 traverse the membrane as a helical segment; it reads WIPFFLLFSSVVVLGGLWWLG.

It is found in the membrane. This is an uncharacterized protein from Synechocystis sp. (strain ATCC 27184 / PCC 6803 / Kazusa).